The sequence spans 516 residues: MEELQGYLEKDRSRQQHFLYPLLFQEYIYALAHDYGLNGSIFYESAEVFGYDNKSSLALVKRLITRIYQQKSLIYLVNNSKQNRFVGHTHNNFFYSQMISESFSIIVEIPFSLRLVSYLKEKEIPKYHNLRSIHSIFPFLEDKLSHLNYVSAILIPHPIHMEILVQILQCWIQDVPFLHLLRFFLHEYHNWNSFLITQKKSIFVFSKEKKRLFRFIYNFYVFECEFLFVFIRNQSSYLRLTSFGTFLERTHFYGKIEHLQIEKLIVICRNDFHRTFWFFKDPFMHYVRYQGKAILASKGTHLLMTKWKYHFVNFWQYYFNFWSQPYRIQINQLSNYSFYFLGYLSSLLINSSAVRNQMLENSFIIDTLTKKFDTIVPVILLIGSLSKAKFCTISGHPISKPIWANLSDSDILDRFGRICRNLFHYHSGSSKKQGLYRIKYILRLSCARTLARKHKSTVRTFLRRLGSGLLEEFFTEEEEVLSLMFPKTTSYTLHGSHRERIWFLDIIRINDLVNRS.

This sequence belongs to the intron maturase 2 family. MatK subfamily.

It is found in the plastid. The protein localises to the chloroplast. Usually encoded in the trnK tRNA gene intron. Probably assists in splicing its own and other chloroplast group II introns. This is Maturase K from Galanthus nivalis (Common snowdrop).